We begin with the raw amino-acid sequence, 657 residues long: MVNSQGKITDSNPVPNHVLLNGLTDKAEKNQGIGNSLCSQYEEKVRPCIDLIDSLRALGVEQDLALPAIAVIGDQSSGKSSVLEALSGVALPRGSGIVTRCPLVLKLKKLINEDEWRGKVSYQDTEMEISDPSEVEVEINKAQDAIAGEGQGISHELISLEVSSPHVPDLTLIDLPGITRVAVGNQPADIGRQTKQLIRKYILKQETINLVVVPCNVDIATTEALSMAQEVDPDGDRTIGILTKPDLVDRGTEGKVVDVAQNLVCHLKKGYMIVKCRGQQDIQDQVSLAEALQKEKDFFEDHPHFRVLLEEGRATVPNLAEKLTSELITHICKTLPLLENQIKENHEKITEELQKYGSDVPEDEHEKMFFLIDKLNAFNQDISSLIQGEESVGEDESRLFTKIRNEFHKWSAVIEKKFQRGYKAIYKQMEKFENRYRGRELPGFVNYKTFEIIIKQQIKELEEPAVDMLHTITDMVQVAFGDISKANFDEFFNLYRTTKSKIEDIKFELEKEAEKSIRLHFQMEQIVYCQDHVYQRALQRVREKDSDEEKKKKTSSMSHDEVSSVNISLSEILEHLLAYRQEATNRISSHIPLIIQYFILQVYGQKLQNGMLQLLQDKDTYSWLLKERSDTSDKRKFLKERLARLAQARRRLAKFPG.

An N-acetylmethionine modification is found at methionine 1. The Dynamin-type G domain occupies 63 to 336 (DLALPAIAVI…LITHICKTLP (274 aa)). The interval 73-80 (GDQSSGKS) is G1 motif. 73–80 (GDQSSGKS) contacts GTP. Residues 98 to 100 (VTR) form a G2 motif region. The interval 174–177 (DLPG) is G3 motif. Residues 174-178 (DLPGI) and 243-246 (TKPD) each bind GTP. The segment at 243 to 246 (TKPD) is G4 motif. Positions 275 to 278 (KCRG) are G5 motif. A bundle signaling element (BSE) region spans residues 337 to 362 (LLENQIKENHEKITEELQKYGSDVPE). The interval 362–529 (EDEHEKMFFL…HFQMEQIVYC (168 aa)) is middle domain. Positions 363-627 (DEHEKMFFLI…KDTYSWLLKE (265 aa)) are stalk. Positions 540-551 (RVREKDSDEEKK) are enriched in basic and acidic residues. Positions 540-559 (RVREKDSDEEKKKKTSSMSH) are disordered. Positions 550-553 (KKKK) are critical for lipid-binding. Positions 569–657 (LSEILEHLLA…ARRRLAKFPG (89 aa)) constitute a GED domain.

The protein belongs to the TRAFAC class dynamin-like GTPase superfamily. Dynamin/Fzo/YdjA family. In terms of assembly, homooligomer. Oligomerizes into multimeric filamentous or ring-like structures by virtue of its stalk domain. Oligomerization is critical for GTPase activity, protein stability, and recognition of viral target structures. Interacts with TRPC1, TRPC3, TRPC4, TRPC5, TRPC6 and TRPC7. Interacts with HSPA5. Interacts with TUBB/TUBB5. Interacts with DDX39A and DDX39B. In terms of processing, ISGylated.

It is found in the cytoplasm. The protein resides in the endoplasmic reticulum membrane. It localises to the perinuclear region. Its function is as follows. Interferon-induced dynamin-like GTPase with antiviral activity. This chain is Interferon-induced GTP-binding protein Mx1 (MX1), found in Canis lupus familiaris (Dog).